We begin with the raw amino-acid sequence, 421 residues long: Anthranilate synthase component 1 (421 aa).

L-tryptophan contacts are provided by residues Ser31 and 207–209; that span reads PYM. A chorismate-binding site is contributed by 242-243; sequence GT. Glu269 provides a ligand contact to Mg(2+). Chorismate-binding positions include Tyr357, Arg377, 391-393, and Gly393; that span reads GAG. Glu406 contacts Mg(2+).

Belongs to the anthranilate synthase component I family. In terms of assembly, heterotetramer consisting of two non-identical subunits: a beta subunit (TrpG) and a large alpha subunit (TrpE). Mg(2+) is required as a cofactor.

It carries out the reaction chorismate + L-glutamine = anthranilate + pyruvate + L-glutamate + H(+). It participates in amino-acid biosynthesis; L-tryptophan biosynthesis; L-tryptophan from chorismate: step 1/5. Its activity is regulated as follows. Cooperatively feedback inhibited by tryptophan. In terms of biological role, part of a heterotetrameric complex that catalyzes the two-step biosynthesis of anthranilate, an intermediate in the biosynthesis of L-tryptophan. In the first step, the glutamine-binding beta subunit (TrpG) of anthranilate synthase (AS) provides the glutamine amidotransferase activity which generates ammonia as a substrate that, along with chorismate, is used in the second step, catalyzed by the large alpha subunit of AS (TrpE) to produce anthranilate. In the absence of TrpG, TrpE can synthesize anthranilate directly from chorismate and high concentrations of ammonia. In Saccharolobus solfataricus (strain ATCC 35092 / DSM 1617 / JCM 11322 / P2) (Sulfolobus solfataricus), this protein is Anthranilate synthase component 1 (trpE).